Here is a 184-residue protein sequence, read N- to C-terminus: Ribosome maturation factor RimM (184 aa).

A PRC barrel domain is found at 105–184 (EDEFYWRELF…RIEVDWDPAF (80 aa)).

The protein belongs to the RimM family. Binds ribosomal protein uS19.

The protein resides in the cytoplasm. In terms of biological role, an accessory protein needed during the final step in the assembly of 30S ribosomal subunit, possibly for assembly of the head region. Essential for efficient processing of 16S rRNA. May be needed both before and after RbfA during the maturation of 16S rRNA. It has affinity for free ribosomal 30S subunits but not for 70S ribosomes. The sequence is that of Ribosome maturation factor RimM from Vibrio cholerae serotype O1 (strain ATCC 39541 / Classical Ogawa 395 / O395).